Reading from the N-terminus, the 32-residue chain is Zinc metalloproteinase carinactivase-1 catalytic subunit (32 aa).

In terms of domain architecture, Peptidase M12B spans 10–32 (FIKLVIVVDHSMVXKXNNDLIAI).

The protein belongs to the venom metalloproteinase (M12B) family. P-III subfamily. P-IIId sub-subfamily. As to quaternary structure, heterodimer of a metalloproteinase subunit and a regulatory subunit comprising two disulfide-linked lectins (14 kDa and 17 kDa chains) (AC Q9PRP7 and AC Q9PRP8). Requires Zn(2+) as cofactor. Expressed by the venom gland.

It localises to the secreted. Its function is as follows. Calcium-dependent prothrombin (F2) activator. This protein may activate prothrombin via recognition by the regulatory subunit of the calcium ion bound conformation of its gamma-carboxyglutamic acid (GLA) domain, and the subsequent conversion of prothrombin to active thrombin is catalyzed by the catalytic subunit. The protein is Zinc metalloproteinase carinactivase-1 catalytic subunit of Echis carinatus (Saw-scaled viper).